The chain runs to 430 residues: Protein AST2 (430 aa).

In terms of biological role, lipid raft-associated protein involved in the targeting of PMA1 from Golgi to the plasma membrane. May induce clustering of PMA1, which facilitates partition of PMA1 into lipid rafts after leaving the ER its and transport to the cell surface. In Saccharomyces cerevisiae (strain ATCC 204508 / S288c) (Baker's yeast), this protein is Protein AST2.